The following is a 515-amino-acid chain: Cytochrome P450 76C3 (515 aa).

The chain crosses the membrane as a helical span at residues 5-25 (LIQGMSLPLYFLLTLFFFFFA). Cys451 lines the heme pocket.

Belongs to the cytochrome P450 family. Heme is required as a cofactor.

Its subcellular location is the membrane. This is Cytochrome P450 76C3 (CYP76C3) from Arabidopsis thaliana (Mouse-ear cress).